Reading from the N-terminus, the 825-residue chain is MTVLQEPVQAAIWQALNHYAYRDAVFLAERLYAEVHSEEALFLLATCYYRSGKAYKAYRLLKGHSCTTPQCKYLLAKCCVDLSKLAEGEQILSGGVFNKQKSHDDLVTEFGDSACFTLSLLGHVYCKTDRLAKGSECYQKSLSLNPFLWSPFESLCEIGEKPDPDQTFKLTSLQNFSSCLPNTCTTLVSNHSLSHRQPETVLTETPQDTIELNRLNLESSNSKYSLNTDSSVSYIDSTVISPDNVPLGPGTAILSKQVQNKPKTGRSLLGGPTALSPLTPSFGILPLETPSPGDGSYLQNYTNTPSVIDVAPTGAPTKKSVARMGQTGTKSVFSQSGNSREVTPVLVAQTQSSGPQTSTTPQVLSPTITSPPNALPRRSSRLFTSDSSTTKENSKKLKMKFPPKIPNRKTKSKTNKGGLTQPSINDSLEITKLDSSIISEGKITTVTPQIQAFNLQKAAAEGLMSLLREMGKGYLALCSYNCKEAINILSHLPSHHYSTGWVLCQIGRAYFELSEYMQAERIFSEVRRIESFRVEGMEIYSTTLWHLQKDVALSVLSKDLTDMDKNSPEAWCAAGNCFSLQREHDIAIKFFQRAIQVDPNYAYAYTLLGHEFVLTEELDKALACFRNAIRVNPRHYNAWYGLGMIYYKQEKFSLAEMHFQKALDINPQSSVLLCHIGVVQHALKKSEKALDTLNKAIVIDPKNPLCKFHRASVLFANEKYKSALQELEELKQIVPKESLVYFLIGKVYKKLGQTHLALMNFSWAMDLDPKGANNQIKEAIDKRYLPDDEEPITQEEQIMGTDESQESSMTDADDTQLHAAESDEF.

TPR repeat units lie at residues 6–35 (EPVQAAIWQALNHYAYRDAVFLAERLYAEV), 38–65 (EEALFLLATCYYRSGKAYKAYRLLKGHS), 67–99 (TTPQCKYLLAKCCVDLSKLAEGEQILSGGVFNK), and 115–145 (CFTLSLLGHVYCKTDRLAKGSECYQKSLSLN). 2 positions are modified to phosphothreonine: Thr-205 and Thr-209. The residue at position 291 (Ser-291) is a Phosphoserine. Residues 306–423 (SVIDVAPTGA…TNKGGLTQPS (118 aa)) are disordered. Position 313 is a phosphothreonine (Thr-313). Residues 326–341 (QTGTKSVFSQSGNSRE) show a composition bias toward polar residues. Ser-339 is modified (phosphoserine). Residues 349-362 (QTQSSGPQTSTTPQ) show a composition bias toward low complexity. Residues 363-372 (VLSPTITSPP) are compositionally biased toward polar residues. The residue at position 367 (Thr-367) is a Phosphothreonine. 2 positions are modified to phosphoserine: Ser-380 and Ser-387. A compositionally biased stretch (polar residues) spans 381 to 391 (RLFTSDSSTTK). Positions 396–414 (KLKMKFPPKIPNRKTKSKT) are enriched in basic residues. Ser-427 is modified (phosphoserine). Thr-431 bears the Phosphothreonine mark. A phosphoserine mark is found at Ser-436 and Ser-439. Thr-447 carries the post-translational modification Phosphothreonine. TPR repeat units follow at residues 465 to 495 (SLLREMGKGYLALCSYNCKEAINILSHLPSH), 499 to 528 (TGWVLCQIGRAYFELSEYMQAERIFSEVRR), 533 to 563 (RVEGMEIYSTTLWHLQKDVALSVLSKDLTDM), 567 to 598 (SPEAWCAAGNCFSLQREHDIAIKFFQRAIQVD), 601 to 631 (YAYAYTLLGHEFVLTEELDKALACFRNAIRV), 635 to 667 (HYNAWYGLGMIYYKQEKFSLAEMHFQKALDINP), 670 to 702 (SVLLCHIGVVQHALKKSEKALDTLNKAIVIDPK), 704 to 734 (PLCKFHRASVLFANEKYKSALQELEELKQIV), and 737 to 768 (ESLVYFLIGKVYKKLGQTHLALMNFSWAMDLD). The disordered stretch occupies residues 782–825 (KRYLPDDEEPITQEEQIMGTDESQESSMTDADDTQLHAAESDEF). Position 822 is a phosphoserine (Ser-822).

It belongs to the APC3/CDC27 family. In terms of assembly, homodimer. The mammalian APC/C is composed at least of 14 distinct subunits ANAPC1, ANAPC2, CDC27/APC3, ANAPC4, ANAPC5, CDC16/APC6, ANAPC7, CDC23/APC8, ANAPC10, ANAPC11, CDC26/APC12, ANAPC13, ANAPC15 and ANAPC16 that assemble into a complex of at least 19 chains with a combined molecular mass of around 1.2 MDa; APC/C interacts with FZR1 and FBXO5. Interacts with RB. Interacts with FAM168B/MANI. Interacts with MCPH1. Post-translationally, phosphorylated. Phosphorylation on Ser-427 and Thr-447 occurs specifically during mitosis.

It localises to the nucleus. The protein localises to the cytoplasm. It is found in the cytoskeleton. Its subcellular location is the spindle. It functions in the pathway protein modification; protein ubiquitination. In terms of biological role, component of the anaphase promoting complex/cyclosome (APC/C), a cell cycle-regulated E3 ubiquitin ligase that controls progression through mitosis and the G1 phase of the cell cycle. The APC/C complex acts by mediating ubiquitination and subsequent degradation of target proteins: it mainly mediates the formation of 'Lys-11'-linked polyubiquitin chains and, to a lower extent, the formation of 'Lys-48'- and 'Lys-63'-linked polyubiquitin chains. The APC/C complex catalyzes assembly of branched 'Lys-11'-/'Lys-48'-linked branched ubiquitin chains on target proteins. The polypeptide is Cell division cycle protein 27 homolog (Cdc27) (Mus musculus (Mouse)).